Reading from the N-terminus, the 225-residue chain is Probable CDP-diacylglycerol--inositol 3-phosphatidyltransferase 2 (225 aa).

A run of 2 helical transmembrane segments spans residues 6–26 (PATLSVYLYIPNIVGYMRVLL) and 29–49 (IAFSVCFSNKTLFSLLYFFSF). Mg(2+) is bound by residues D52 and D55. A CDP-1,2-diacyl-sn-glycerol-binding residues include G56, R60, and S66. D73 and D77 together coordinate Mg(2+). Residue D77 is the Proton acceptor of the active site. The next 3 helical transmembrane spans lie at 84 to 104 (LLVILSQIYRPSLVFLSLLAL), 143 to 163 (MFMGYCCVSCEVLYIILLLIA), and 184 to 204 (LSLLLALSIFGWSIKQIINVI).

Belongs to the CDP-alcohol phosphatidyltransferase class-I family. The cofactor is Mg(2+). Mn(2+) serves as cofactor.

The protein localises to the membrane. It catalyses the reaction a CDP-1,2-diacyl-sn-glycerol + myo-inositol = a 1,2-diacyl-sn-glycero-3-phospho-(1D-myo-inositol) + CMP + H(+). In terms of biological role, catalyzes the biosynthesis of phosphatidylinositol (PtdIns) as well as PtdIns:inositol exchange reaction. May thus act to reduce an excessive cellular PtdIns content. The exchange activity is due to the reverse reaction of PtdIns synthase and is dependent on CMP, which is tightly bound to the enzyme. This chain is Probable CDP-diacylglycerol--inositol 3-phosphatidyltransferase 2 (PIS2), found in Arabidopsis thaliana (Mouse-ear cress).